Reading from the N-terminus, the 863-residue chain is Axin-1 (863 aa).

The interval 1-81 (MNVQEQGFPL…PEGSASPTPP (81 aa)) is disordered. A Tankyrase-binding motif motif is present at residues 20-29 (APRPPVPGEE). Positions 34 to 61 (STDSRPVNHSFCSGKGTSIKSETSTATP) are enriched in polar residues. Serine 75 carries the post-translational modification Phosphoserine. The residue at position 77 (serine 77) is a Phosphoserine; by CK1. The 124-residue stretch at 88–211 (SLHSLLDDQD…LKSDIYLEYT (124 aa)) folds into the RGS domain. An interaction with TP53 region spans residues 209–338 (EYTRTGSESP…DADTLSLTDS (130 aa)). Disordered regions lie at residues 215-240 (SESP…YLPT), 249-268 (CDQD…SRLT), and 315-344 (ATSA…DGIP). Phosphoserine is present on serine 217. The segment covering 249–258 (CDQDADEDDG) has biased composition (acidic residues). Residues 325–339 (SLSSDADTLSLTDSS) are compositionally biased toward low complexity. Residues 348-432 (IRKQHRREMQ…EDGEMPSGPM (85 aa)) form an interaction with GSK3B region. The interaction with SIAH1 stretch occupies residues 353–411 (RREMQESIQVNGRVPLPHIPRTYRMPKEIRVEPQKFAEELIHRLEAVQRTREAEEKLEE). An interaction with beta-catenin region spans residues 433–501 (ASHKLPSVPA…SPDSGHVAKT (69 aa)). Residue serine 468 is modified to Phosphoserine; by CK1. Position 480 is a phosphothreonine; by GSK3-beta (threonine 480). At serine 485 the chain carries Phosphoserine; by GSK3-beta. A phosphoserine mark is found at serine 492 and serine 509. Residues 505–758 (GGTASGHGKH…PVLSVVPAVS (254 aa)) form an interaction with RNF111 region. The span at 529–542 (HHRHVHHHVHHNSA) shows a compositional bias: basic residues. Disordered stretches follow at residues 529-624 (HHRH…DAEK) and 642-664 (HRKA…SRPL). The span at 543-554 (RPKEQMEAEVAR) shows a compositional bias: basic and acidic residues. Residues 572-790 (PRSYSENAGT…CDSIVVAYYF (219 aa)) are interaction with PPP2CA. The span at 575–584 (YSENAGTTLS) shows a compositional bias: polar residues. An interaction with HIPK2 region spans residues 678–753 (AQLRNSVQPS…RPACAPVLSV (76 aa)). Positions 781 to 863 (CDSIVVAYYF…KIIGKVEKVD (83 aa)) constitute a DIX domain. Glycyl lysine isopeptide (Lys-Gly) (interchain with G-Cter in SUMO) cross-links involve residues lysine 858 and lysine 861.

Homodimer. Component of the beta-catenin destruction complex, containing at least CTNNB1, an axin and GSK3B, that regulates CTNNB1 protein levels through phosphorylation and ubiquitination. Interacts with GSK3B; the interaction hyperphosphorylates CTNNB1 leading to its ubiquitination and destruction. Interacts with DAXX; the interaction stimulates the interaction of DAXX with TP53, stimulates 'Ser-46' phosphorylation of TP53 and induces cell death on UV irradiation. Also interacts with APC, RNF111, SMAD6 and SMAD7. Interacts (via the C-terminal) with PPP1CA; the interaction dephosphorylates AXIN1 and regulates interaction with GSK3B. Interacts with PPP2CA; the interaction dephosphorylates AXIN1. Interacts with MDFI; the interaction decreases AXIN1-mediated JUN N-terminal kinase (JNK) activation. Interacts with MDFIC; the interaction inhibits beta-cateninin-mediated signaling and AXIN1-mediated JUN N-terminal kinase (JNK) activation. Binds ANKRD6, PIAS1, PIAS2, PIAS4, SUMO1, MAP3K1 and MAP3K4. Component of the AXIN1-HIPK2-TP53 complex. Interacts directly in the complex with TP53 and HIPK2. Interacts with DIXDC1; the interaction prevents interaction with MAP3K1. Interacts with AIDA; the interaction blocks the AXIN1-mediated JNK activation through disrupting AXIN1 homodimerization and Wnt signaling. Interacts with LRP5 (via its phosphorylated PPPSP motifs); the interaction is stimulated by WNT1 and GSK3B and activates beta-catenin signaling. Interacts with CTNNB1 (via the armadillo repeats 2-7). Interacts with MACF1. Found in a complex composed of MACF1, APC, AXIN1, CTNNB1 and GSK3B. Interacts with TNKS. Interacts with DAB2; the interaction is mutually exclusive with the AXIN1:PPP1CA interaction. Interacts with ZBED3 (via PPPSP motif); the interaction is direct, enhanced by protein kinase GSK3B and casein kinase CSNK1E activities and decreases GSK3B-induced beta-catenin serine and threonine phosphorylations. Interacts with WDR26. Interacts with GID8. Interacts with SIAH1 and SIAH2; both probably catalyze AXIN1 ubiquitination and subsequent proteasome-mediated ubiquitin-dependent degradation. Interaction with GSK3B and AXIN1 is competitive. In terms of processing, phosphorylation and dephosphorylation of AXIN1 regulates assembly and function of the beta-catenin complex. Phosphorylated by CK1 and GSK3B. Dephosphorylated by PPP1CA and PPP2CA. Phosphorylation by CK1 enhances binding of GSK3B to AXIN1. Also phosphorylated by CDK2 which regulates interaction with CTNBB1. Post-translationally, ADP-ribosylated by tankyrase TNKS and TNKS2. Poly-ADP-ribosylated protein is recognized by RNF146, followed by ubiquitination and subsequent activation of the Wnt signaling pathway. Ubiquitinated by RNF146 when poly-ADP-ribosylated, leading to its degradation and subsequent activation of the Wnt signaling pathway. Deubiquitinated by USP34, deubiquitinated downstream of beta-catenin stabilization step: deubiquitination is important for nuclear accumulation during Wnt signaling to positively regulate beta-catenin (CTNBB1)-mediated transcription. Sumoylation at Lys-858 and Lys-861 prevents ubiquitination and degradation. Sumoylation is required for AXIN1-mediated JNK activation. Ubiquitination by SIAH1 and SIAH2 induces its proteasomal degradation as part of the activation of the Wnt signaling pathway. As to expression, expressed in embryonic stem cells.

Its subcellular location is the cytoplasm. The protein resides in the nucleus. It localises to the cell membrane. It is found in the membrane. Component of the beta-catenin destruction complex required for regulating CTNNB1 levels through phosphorylation and ubiquitination, and modulating Wnt-signaling. Controls dorsoventral patterning via two opposing effects; down-regulates CTNNB1 to inhibit the Wnt signaling pathway and ventralize embryos, but also dorsalizes embryos by activating a Wnt-independent JNK signaling pathway. In Wnt signaling, probably facilitates the phosphorylation of CTNNB1 and APC by GSK3B. Likely to function as a tumor suppressor. Facilitates the phosphorylation of TP53 by HIPK2 upon ultraviolet irradiation. Enhances TGF-beta signaling by recruiting the RNF111 E3 ubiquitin ligase and promoting the degradation of inhibitory SMAD7. Also a component of the AXIN1-HIPK2-TP53 complex which controls cell growth, apoptosis and development. This chain is Axin-1 (Axin1), found in Mus musculus (Mouse).